A 926-amino-acid chain; its full sequence is Chitin synthase-like protein 2 (926 aa).

The segment at 1 to 56 is disordered; sequence MSFQNPSYINAKHRSFLQPKDTQDSQDLRNWVSHSSVDEETAYSSSTLSSSSSKSF. Low complexity predominate over residues 44-55; it reads SSSTLSSSSSKS. Transmembrane regions (helical) follow at residues 564 to 584, 599 to 619, 641 to 661, 671 to 691, 721 to 741, 853 to 873, and 885 to 905; these read INSSFSLAVYVIVDFFSLWTT, LVFAIEKLVNFFSMANFFLAF, LFLVFEYILICLIFSQFMLAM, LLFISTALFSIIMIYFVFCVF, LLILACYAFVSLICMDPFFIF, VLVWAVSNLILAIVLIQVFDG, and IFWSIVAFTAWKTMGAVTFIA.

It belongs to the chitin synthase family.

It is found in the membrane. Plays a role in septum formation. Has no chitin synthase activity. In Schizosaccharomyces pombe (strain 972 / ATCC 24843) (Fission yeast), this protein is Chitin synthase-like protein 2 (chs2).